The primary structure comprises 430 residues: Adenylosuccinate synthetase (430 aa).

Residues 13–19 (GDEGKGK) and 41–43 (GHT) each bind GTP. D14 acts as the Proton acceptor in catalysis. The Mg(2+) site is built by D14 and G41. IMP-binding positions include 14-17 (DEGK), 39-42 (NAGH), T130, R144, Q225, T240, and R304. H42 (proton donor) is an active-site residue. 300 to 306 (ATTGRKR) is a substrate binding site. GTP-binding positions include R306, 332–334 (KLD), and 414–416 (STG).

The protein belongs to the adenylosuccinate synthetase family. As to quaternary structure, homodimer. Requires Mg(2+) as cofactor.

The protein resides in the cytoplasm. It carries out the reaction IMP + L-aspartate + GTP = N(6)-(1,2-dicarboxyethyl)-AMP + GDP + phosphate + 2 H(+). Its pathway is purine metabolism; AMP biosynthesis via de novo pathway; AMP from IMP: step 1/2. Its function is as follows. Plays an important role in the de novo pathway of purine nucleotide biosynthesis. Catalyzes the first committed step in the biosynthesis of AMP from IMP. This Teredinibacter turnerae (strain ATCC 39867 / T7901) protein is Adenylosuccinate synthetase.